A 331-amino-acid polypeptide reads, in one-letter code: Small ribosomal subunit protein uS2 (331 aa).

It belongs to the universal ribosomal protein uS2 family.

This Rhodopseudomonas palustris (strain BisB5) protein is Small ribosomal subunit protein uS2.